Consider the following 285-residue polypeptide: Secreted alkaline triacylglycerol lipase (285 aa).

The N-terminal stretch at 1–20 is a signal peptide; it reads MLFNYQSLLVGVSLISQALS. The active-site Nucleophile is serine 159. Residues aspartate 215 and histidine 268 each act as charge relay system in the active site.

It belongs to the AB hydrolase superfamily. FaeA family.

It is found in the secreted. It carries out the reaction a triacylglycerol + H2O = a diacylglycerol + a fatty acid + H(+). Functionally, secreted alkaline lipase that hydrolyzes acylglycerol lipids such as triacylglycerols and consequently releases free fatty acid. Is able to hydrolyze tributyrin (1,2,3-tributyryl-glycerin). The polypeptide is Secreted alkaline triacylglycerol lipase (Penicillium cyclopium).